A 205-amino-acid chain; its full sequence is Homeobox protein goosecoid-2 (205 aa).

Disordered stretches follow at residues 33–58 (SLPA…EPGA) and 185–205 (KRAS…KGSC). The homeobox DNA-binding region spans 126–185 (TRRHRTIFSEEQLQALEALFVQNQYPDVSTRERLAGRIRLREERVEVWFKNRRAKWRHQK).

This sequence belongs to the paired homeobox family. Bicoid subfamily. As to expression, detected in adult testis and pituitary, and in 9-10 week fetal tissue (thorax). Probably expressed in other tissues at low levels.

The protein localises to the nucleus. Its function is as follows. May have a role in development. May regulate its own transcription. May bind the bicoid consensus sequence TAATCC. This Homo sapiens (Human) protein is Homeobox protein goosecoid-2 (GSC2).